We begin with the raw amino-acid sequence, 437 residues long: Protein translocase subunit SecY (437 aa).

Helical transmembrane passes span 19 to 39 (LFTLGIIVIYRLGAHIPAPGV), 68 to 88 (LLQITIFALGIMPYITASIIL), 121 to 141 (VALAILQGTGLVATARSGALF), 156 to 176 (IFTTIIMVLTMTAGTPPVMWL), 188 to 208 (GMSIPMFISIAATFPGALWAI), 218 to 238 (WIEFGTVILIGFVMVALVVFV), 274 to 294 (GVIPVIFASSLLYIPALIVQF), 317 to 337 (YIATYFVLIVFFAFFYVAISF), 378 to 398 (SLYLGLIALVPTMALAGFGGA), and 400 to 420 (QNFPFGGTSILIIVGVGLETV).

The protein belongs to the SecY/SEC61-alpha family. In terms of assembly, component of the Sec protein translocase complex. Heterotrimer consisting of SecY, SecE and SecG subunits. The heterotrimers can form oligomers, although 1 heterotrimer is thought to be able to translocate proteins. Interacts with the ribosome. Interacts with SecDF, and other proteins may be involved. Interacts with SecA.

Its subcellular location is the cell membrane. In terms of biological role, the central subunit of the protein translocation channel SecYEG. Consists of two halves formed by TMs 1-5 and 6-10. These two domains form a lateral gate at the front which open onto the bilayer between TMs 2 and 7, and are clamped together by SecE at the back. The channel is closed by both a pore ring composed of hydrophobic SecY resides and a short helix (helix 2A) on the extracellular side of the membrane which forms a plug. The plug probably moves laterally to allow the channel to open. The ring and the pore may move independently. The protein is Protein translocase subunit SecY of Streptomyces griseus.